Consider the following 272-residue polypeptide: MTESLEMGKSIDFNVQTFDFKSAQFYLDRAYANAPFIHCLTNNTTKFFVANALLAIGAKPAMVESWQEVVEFSQRAANVVMNLDSLTDERLRSLSMSAQVAHDHGKWWVFDPAAVSDILSYRSGFARELLRYYPRVIRGNASEISYLNDTYGRRSFENVMSSSEAIEAAVKLAIHQRAVVVVTGEIDYVTDGETILAVRGGHPFLGRVCGTGCVLSAMIASTVLCGDVLYGAASACALMKRAGERAGLTTSGLGSFYVALLDNLTFPMRYQD.

A substrate-binding site is contributed by Met62. ATP contacts are provided by Arg138 and Thr183. Gly210 contributes to the substrate binding site.

The protein belongs to the Thz kinase family. Mg(2+) serves as cofactor.

The enzyme catalyses 5-(2-hydroxyethyl)-4-methylthiazole + ATP = 4-methyl-5-(2-phosphooxyethyl)-thiazole + ADP + H(+). Its pathway is cofactor biosynthesis; thiamine diphosphate biosynthesis; 4-methyl-5-(2-phosphoethyl)-thiazole from 5-(2-hydroxyethyl)-4-methylthiazole: step 1/1. In terms of biological role, catalyzes the phosphorylation of the hydroxyl group of 4-methyl-5-beta-hydroxyethylthiazole (THZ). This Dichelobacter nodosus (strain VCS1703A) protein is Hydroxyethylthiazole kinase.